A 286-amino-acid polypeptide reads, in one-letter code: MKVLLELLLGYSVLILAHELPYLPSTRHPPKEELPYWCTYVKNCDFCWDCQNDICKNKITNESISINSIVNCRVTRDSPSQSCFYEISVKMPNHHSMECSHPRPYTGNEIFMEKWGGGGDYWPIIIRHCCFYLVFSIAFVGYIVFVYNKNLHLNTTMKLLALLSILIWLSQPALNRPLSIFYMKQNLPRTYTPPVRELEYWCTYAKHCDFCWTCKDGMCKNKVFRDHPIITQNDYIVNCTVSRWHDRCMYEAHFRIHYQHNMNCSQPKDLEWFIELKRHVINQDDL.

A helical membrane pass occupies residues 1 to 17; that stretch reads MKVLLELLLGYSVLILA. Asparagine 61 carries N-linked (GlcNAc...) asparagine; by host glycosylation. 2 consecutive transmembrane segments (helical) span residues 128–148 and 153–173; these read HCCF…FVYN and LNTT…SQPA. N-linked (GlcNAc...) asparagine; by host glycosylation is found at asparagine 238 and asparagine 263.

It belongs to the asfivirus MGF 110 family.

It is found in the host membrane. Its function is as follows. Plays a role in virus cell tropism, and may be required for efficient virus replication in macrophages. This is Protein MGF 360-3L from African swine fever virus (isolate Tick/Malawi/Lil 20-1/1983) (ASFV).